The primary structure comprises 628 residues: Isoleucine--tRNA ligase (628 aa).

The short motif at 505–509 is the 'KMSKS' region element; that stretch reads KMSKR. Lys-508 contacts ATP.

This sequence belongs to the class-I aminoacyl-tRNA synthetase family.

It catalyses the reaction tRNA(Ile) + L-isoleucine + ATP = L-isoleucyl-tRNA(Ile) + AMP + diphosphate. This Antonospora locustae (Microsporidian parasite) protein is Isoleucine--tRNA ligase.